We begin with the raw amino-acid sequence, 174 residues long: FAD synthase (174 aa).

ATP is bound by residues 34-35 (TF), 39-42 (HPGH), aspartate 119, and tyrosine 147.

This sequence belongs to the archaeal FAD synthase family. In terms of assembly, homodimer. A divalent metal cation is required as a cofactor.

The catalysed reaction is FMN + ATP + H(+) = FAD + diphosphate. The protein operates within cofactor biosynthesis; FAD biosynthesis; FAD from FMN: step 1/1. In terms of biological role, catalyzes the transfer of the AMP portion of ATP to flavin mononucleotide (FMN) to produce flavin adenine dinucleotide (FAD) coenzyme. The chain is FAD synthase from Methanococcus voltae (strain ATCC BAA-1334 / A3).